The sequence spans 1675 residues: Clathrin heavy chain 1 (1675 aa).

An N-acetylalanine modification is found at alanine 2. The globular terminal domain stretch occupies residues 2-479; it reads AQILPIRFQE…VDPTLALSVY (478 aa). WD40-like repeat regions lie at residues 24–67, 68–107, 108–149, 150–195, 196–257, 258–301, and 302–330; these read NIGF…RPIS, ADSA…MTDD, VTFW…SSLA, GCQI…QPIE, GHAA…PEAQ, NDFP…ISGE, and TIFV…VCVE. At serine 67 the chain carries Phosphoserine. Threonine 105 carries the post-translational modification Phosphothreonine. Position 184 is a phosphotyrosine (tyrosine 184). Threonine 394 carries the post-translational modification Phosphothreonine. A binding site for the uncoating ATPase, involved in lattice disassembly region spans residues 449–465; it reads EKWLKEDKLECSEELGD. The tract at residues 480–523 is flexible linker; it reads LRANVPNKVIQCFAETGQVQKIVLYAKKVGYTPDWIFLLRNVMR. Residues 524–634 form a distal segment region; the sequence is ISPDQGQQFA…RALEHFTDLY (111 aa). Residues 524–1675 are heavy chain arm; sequence ISPDQGQQFA…QPQPGFGYSM (1152 aa). 7 CHCR repeats span residues 537–683, 686–828, 833–972, 979–1124, 1128–1269, 1274–1420, and 1423–1566; these read VQDE…QIWV, ASKY…SEDV, ILVV…PLID, LSET…VKEA, YIKA…FRLA, LHIV…LLLN, and LMVL…RECF. Position 634 is a phosphotyrosine (tyrosine 634). Positions 639–1675 are proximal segment; sequence AVVHTHLLNP…QPQPGFGYSM (1037 aa). At lysine 737 the chain carries N6-succinyllysine. At lysine 856 the chain carries N6-acetyllysine. Tyrosine 899 is modified (phosphotyrosine). Position 1167 is a phosphoserine (serine 1167). At tyrosine 1206 the chain carries Phosphotyrosine. The tract at residues 1213–1522 is involved in binding clathrin light chain; the sequence is AAKLLYNNVS…YLFKGNNRWK (310 aa). Serine 1229 is subject to Phosphoserine. Lysine 1441 is modified (N6-acetyllysine; alternate). An N6-succinyllysine; alternate modification is found at lysine 1441. 2 positions are modified to phosphotyrosine: tyrosine 1477 and tyrosine 1487. At serine 1494 the chain carries Phosphoserine. At lysine 1501 the chain carries N6-acetyllysine. Residues 1550 to 1675 form a trimerization region; that stretch reads AEELLQWFLQ…QPQPGFGYSM (126 aa).

This sequence belongs to the clathrin heavy chain family. In terms of assembly, clathrin triskelions, composed of 3 heavy chains and 3 light chains, are the basic subunits of the clathrin coat. In the presence of light chains, hub assembly is influenced by both the pH and the concentration of calcium. Interacts with HIP1. Interacts with DENND1A, DENND1B and DENND1C. Interacts with OCRL. Interacts with ERBB2. Interacts with FKBP6. Interacts with CKAP5 and TACC3 forming the TACC3/ch-TOG/clathrin complex located at spindle inter-microtubules bridges; the complex implicates clathrin triskelions; TACC3 and CLTC are proposed to form a composite microtubule interaction surface. Interacts with ATG16L1 (via N-terminus). Interacts with RFTN1; the interaction occurs in response to pathogens. Interacts with USP2 isoform 2. Interacts with TMEM106B (via N-terminus). Interacts with DNAJC6; this interaction produces a local change in heavy-chain contacts, creating a detectable global distortion of the clathrin coat and leads to the recruitment of HSPA8.

It localises to the cytoplasmic vesicle membrane. Its subcellular location is the membrane. The protein localises to the coated pit. The protein resides in the melanosome. It is found in the cytoplasm. It localises to the cytoskeleton. Its subcellular location is the spindle. In terms of biological role, clathrin is the major protein of the polyhedral coat of coated pits and vesicles. Two different adapter protein complexes link the clathrin lattice either to the plasma membrane or to the trans-Golgi network. Acts as a component of the TACC3/ch-TOG/clathrin complex proposed to contribute to stabilization of kinetochore fibers of the mitotic spindle by acting as inter-microtubule bridge. The TACC3/ch-TOG/clathrin complex is required for the maintenance of kinetochore fiber tension. Plays a role in early autophagosome formation. Interaction with DNAJC6 mediates the recruitment of HSPA8 to the clathrin lattice and creates local destabilization of the lattice promoting uncoating. The polypeptide is Clathrin heavy chain 1 (Rattus norvegicus (Rat)).